The chain runs to 496 residues: Deoxyribodipyrimidine photo-lyase (496 aa).

The 133-residue stretch at 28-160 folds into the Photolyase/cryptochrome alpha/beta domain; the sequence is GPVVYWMFRD…EVDAHNVVPM (133 aa). FAD contacts are provided by residues Tyr-256, 269-273, 307-315, and 415-417; these read LSGLS, ELIVRRELS, and DGR. Glu-307 is a binding site for DNA.

This sequence belongs to the DNA photolyase class-2 family. The cofactor is FAD. In terms of tissue distribution, highly expressed in flowers. Expressed in roots and stems.

It localises to the nucleus. It carries out the reaction cyclobutadipyrimidine (in DNA) = 2 pyrimidine residues (in DNA).. Involved in repair of UV radiation-induced DNA damage. Catalyzes the light-dependent monomerization (300-600 nm) of cyclobutylpyrimidine dimers (CPDs), which are formed between adjacent bases on the same DNA strand upon exposure to ultraviolet radiation. Required for plant survival in the presence of UV-B light. Not involved in the repair of (6-4) photoproducts. The chain is Deoxyribodipyrimidine photo-lyase (PHR1) from Arabidopsis thaliana (Mouse-ear cress).